The sequence spans 338 residues: Ketol-acid reductoisomerase (NADP(+)) (338 aa).

Residues 1–181 enclose the KARI N-terminal Rossmann domain; sequence MKVFYDKDCD…GGGRAGIIET (181 aa). NADP(+) contacts are provided by residues 24-27, arginine 47, and serine 52; that span reads YGSQ. Residue histidine 107 is part of the active site. NADP(+) is bound at residue glycine 133. The 146-residue stretch at 182–327 folds into the KARI C-terminal knotted domain; it reads NFREETETDL…GKLRAMMPWI (146 aa). 4 residues coordinate Mg(2+): aspartate 190, glutamate 194, glutamate 226, and glutamate 230. Serine 251 contributes to the substrate binding site.

This sequence belongs to the ketol-acid reductoisomerase family. The cofactor is Mg(2+).

It carries out the reaction (2R)-2,3-dihydroxy-3-methylbutanoate + NADP(+) = (2S)-2-acetolactate + NADPH + H(+). The catalysed reaction is (2R,3R)-2,3-dihydroxy-3-methylpentanoate + NADP(+) = (S)-2-ethyl-2-hydroxy-3-oxobutanoate + NADPH + H(+). The protein operates within amino-acid biosynthesis; L-isoleucine biosynthesis; L-isoleucine from 2-oxobutanoate: step 2/4. It participates in amino-acid biosynthesis; L-valine biosynthesis; L-valine from pyruvate: step 2/4. Its function is as follows. Involved in the biosynthesis of branched-chain amino acids (BCAA). Catalyzes an alkyl-migration followed by a ketol-acid reduction of (S)-2-acetolactate (S2AL) to yield (R)-2,3-dihydroxy-isovalerate. In the isomerase reaction, S2AL is rearranged via a Mg-dependent methyl migration to produce 3-hydroxy-3-methyl-2-ketobutyrate (HMKB). In the reductase reaction, this 2-ketoacid undergoes a metal-dependent reduction by NADPH to yield (R)-2,3-dihydroxy-isovalerate. The polypeptide is Ketol-acid reductoisomerase (NADP(+)) (Bordetella pertussis (strain Tohama I / ATCC BAA-589 / NCTC 13251)).